A 116-amino-acid chain; its full sequence is U30-theraphotoxin-Cg1a (116 aa).

The N-terminal stretch at 1 to 17 (MKLCVLTIASLLVTVTS) is a signal peptide. The propeptide occupies 18 to 53 (LETQKEIAEGSELTREETPSLVEHKEDEAAAASEKR). The interval 24 to 46 (IAEGSELTREETPSLVEHKEDEA) is disordered. Cystine bridges form between Cys-55–Cys-69, Cys-62–Cys-75, Cys-66–Cys-112, and Cys-68–Cys-88.

It belongs to the neurotoxin 03 (Tx2) family. 02 subfamily. HNTX-XV sub-subfamily. Expressed by the venom gland.

The protein localises to the secreted. Functionally, probable ion channel inhibitor. The polypeptide is U30-theraphotoxin-Cg1a (Chilobrachys guangxiensis (Chinese earth tiger tarantula)).